A 180-amino-acid chain; its full sequence is Probable chorismate pyruvate-lyase (180 aa).

Substrate-binding residues include Arg76, Leu113, and Glu171.

It belongs to the UbiC family.

It localises to the cytoplasm. It catalyses the reaction chorismate = 4-hydroxybenzoate + pyruvate. Its pathway is cofactor biosynthesis; ubiquinone biosynthesis. In terms of biological role, removes the pyruvyl group from chorismate, with concomitant aromatization of the ring, to provide 4-hydroxybenzoate (4HB) for the ubiquinone pathway. This chain is Probable chorismate pyruvate-lyase, found in Pseudoalteromonas translucida (strain TAC 125).